We begin with the raw amino-acid sequence, 123 residues long: MSSTTTTTQTTSQVETKAVSKPLGMRVNGKQWHAPKKAFRPGSGLTSYEKRAKERQLLAAVKAKEKELKDEKEAERKRRIEALKEKRAKKEEKERYEKMAEKMHKKRVERLKRKEKRNKLINS.

Residues 1-13 (MSSTTTTTQTTSQ) show a composition bias toward low complexity. Disordered stretches follow at residues 1–47 (MSST…GLTS) and 85–123 (EKRA…LINS). Residues 49-110 (EKRAKERQLL…EKMHKKRVER (62 aa)) adopt a coiled-coil conformation. Residues 85-102 (EKRAKKEEKERYEKMAEK) show a composition bias toward basic and acidic residues. Over residues 103-123 (MHKKRVERLKRKEKRNKLINS) the composition is skewed to basic residues.

This sequence belongs to the CGR1 family.

It localises to the nucleus. It is found in the nucleolus. In terms of biological role, involved in nucleolar integrity and required for processing of the pre-rRNA for the 60S ribosome subunit. The chain is rRNA-processing protein cgr-1 (cgr-1) from Neurospora crassa (strain ATCC 24698 / 74-OR23-1A / CBS 708.71 / DSM 1257 / FGSC 987).